The sequence spans 354 residues: Probable L-ascorbate-6-phosphate lactonase UlaG (354 aa).

It belongs to the UlaG family. A divalent metal cation is required as a cofactor.

The protein localises to the cytoplasm. It carries out the reaction L-ascorbate 6-phosphate + H2O = 3-dehydro-L-gulonate 6-phosphate. Its pathway is cofactor degradation; L-ascorbate degradation; D-xylulose 5-phosphate from L-ascorbate: step 1/4. Its function is as follows. Probably catalyzes the hydrolysis of L-ascorbate-6-P into 3-keto-L-gulonate-6-P. Is essential for L-ascorbate utilization under anaerobic conditions. This chain is Probable L-ascorbate-6-phosphate lactonase UlaG, found in Shigella flexneri.